A 296-amino-acid chain; its full sequence is Partitioning protein REP2 (296 aa).

Met1 is subject to N-acetylmethionine. Residues 1-57 (MDDIETAKNLTVKARTAYSVWDVCRLFIEMIAPDVDIDIESKRKSDELLFPGYVIRP) are interaction with REP1. Residues 58–296 (MESLTTGRPY…GRKSRNTSRV (239 aa)) form a DNA-binding, and self-association region. A disordered region spans residues 228–296 (SELEGRTEVN…GRKSRNTSRV (69 aa)). The span at 275 to 296 (PTKKRRVATRVRGRKSRNTSRV) shows a compositional bias: basic residues. The tract at residues 276 to 296 (TKKRRVATRVRGRKSRNTSRV) is nuclear localization.

In terms of assembly, interacts with REP1.

The protein resides in the nucleus. Functionally, part of the plasmid partitioning system, which ensures the equal distribution of replicated plasmid molecules to daughter cells. The plasmids exist as well-organized plasmid foci within the nucleus that stay together throughout the cell-cycle and act as entity during segregation, effetively reducing copy number to one. Plasmid partitioning requires the proteins REP1, REP2, and a cis-acting locus STB (REP3). REP1-REP2 stably associate with CSE4-containing chromatin at STB during S-phase, marking the locus with a centromeric tag, and thereby probably catching mitotic spindle microtubules to the plasmid cluster and coupling plasmid segregation to chromosome segregation. REP1-REP2 are required to recruit the cohesin complex to the STB locus for pairing of the replicated plasmid cluster, a prerequisite for successful plasmid segregation. REP1-REP2 also negatively regulate expression of site-specific recombinase FLP and of RAF1. In Saccharomyces cerevisiae (strain ATCC 204508 / S288c) (Baker's yeast), this protein is Partitioning protein REP2 (REP2).